A 348-amino-acid polypeptide reads, in one-letter code: D-erythrose-4-phosphate dehydrogenase (348 aa).

NAD(+)-binding positions include 12 to 13 (RI) and R81. Substrate is bound by residues 154–156 (SCT), R200, 213–214 (TK), and R236. C155 functions as the Nucleophile in the catalytic mechanism. N318 lines the NAD(+) pocket.

Belongs to the glyceraldehyde-3-phosphate dehydrogenase family. Epd subfamily. In terms of assembly, homotetramer.

The protein resides in the cytoplasm. It carries out the reaction D-erythrose 4-phosphate + NAD(+) + H2O = 4-phospho-D-erythronate + NADH + 2 H(+). It functions in the pathway cofactor biosynthesis; pyridoxine 5'-phosphate biosynthesis; pyridoxine 5'-phosphate from D-erythrose 4-phosphate: step 1/5. Functionally, catalyzes the NAD-dependent conversion of D-erythrose 4-phosphate to 4-phosphoerythronate. The protein is D-erythrose-4-phosphate dehydrogenase of Salmonella agona (strain SL483).